A 767-amino-acid polypeptide reads, in one-letter code: Polyribonucleotide nucleotidyltransferase (767 aa).

Asp-509 and Asp-515 together coordinate Mg(2+). In terms of domain architecture, KH spans 575–634; it reads PRILTVKVPIDKIGEVIGPKGKMINSIQDETGAEITIEDDGTIYIGATDGPSAEAARDAI. The S1 motif domain maps to 646-718; sequence GERYLGTVVK…ERGKLSLVPV (73 aa). Residues 725–767 form a disordered region; that stretch reads AVAAPNGGESPNGAKKTDASGNGAKQPRRRRRTRSSSRSSENT. Residues 750–759 show a composition bias toward basic residues; it reads QPRRRRRTRS.

This sequence belongs to the polyribonucleotide nucleotidyltransferase family. Requires Mg(2+) as cofactor.

The protein localises to the cytoplasm. The enzyme catalyses RNA(n+1) + phosphate = RNA(n) + a ribonucleoside 5'-diphosphate. In terms of biological role, involved in mRNA degradation. Catalyzes the phosphorolysis of single-stranded polyribonucleotides processively in the 3'- to 5'-direction. This is Polyribonucleotide nucleotidyltransferase from Thermobifida fusca (strain YX).